The primary structure comprises 287 residues: Acetyl-coenzyme A carboxylase carboxyl transferase subunit beta (287 aa).

Residues 25–287 (VWTKCSACEQ…KMLNTHVIEE (263 aa)) form the CoA carboxyltransferase N-terminal domain. Positions 29, 32, 48, and 51 each coordinate Zn(2+). Residues 29–51 (CSACEQVLYRAELERNLEVCPKC) form a C4-type zinc finger.

Belongs to the AccD/PCCB family. Acetyl-CoA carboxylase is a heterohexamer composed of biotin carboxyl carrier protein (AccB), biotin carboxylase (AccC) and two subunits each of ACCase subunit alpha (AccA) and ACCase subunit beta (AccD). Zn(2+) is required as a cofactor.

The protein resides in the cytoplasm. It carries out the reaction N(6)-carboxybiotinyl-L-lysyl-[protein] + acetyl-CoA = N(6)-biotinyl-L-lysyl-[protein] + malonyl-CoA. It functions in the pathway lipid metabolism; malonyl-CoA biosynthesis; malonyl-CoA from acetyl-CoA: step 1/1. Component of the acetyl coenzyme A carboxylase (ACC) complex. Biotin carboxylase (BC) catalyzes the carboxylation of biotin on its carrier protein (BCCP) and then the CO(2) group is transferred by the transcarboxylase to acetyl-CoA to form malonyl-CoA. This chain is Acetyl-coenzyme A carboxylase carboxyl transferase subunit beta, found in Aeromonas salmonicida (strain A449).